A 100-amino-acid polypeptide reads, in one-letter code: Urease subunit gamma (100 aa).

The protein belongs to the urease gamma subunit family. Heterotrimer of UreA (gamma), UreB (beta) and UreC (alpha) subunits. Three heterotrimers associate to form the active enzyme.

Its subcellular location is the cytoplasm. The catalysed reaction is urea + 2 H2O + H(+) = hydrogencarbonate + 2 NH4(+). It functions in the pathway nitrogen metabolism; urea degradation; CO(2) and NH(3) from urea (urease route): step 1/1. In Blochmanniella floridana, this protein is Urease subunit gamma.